Reading from the N-terminus, the 259-residue chain is MEMMMTAAPRIAFLASTAEPAQRARQELMARYGDCSIEEADVLCALGGDGFMLRTLHRHGASGKPVYGMKLGSVGFLMNQYHDDLLERLQRAEPAKLRPLQMMAQTESGVSVESLAYNEVSLLRQTHQAAYISIDLNGQTRIDELTGDGVIVATPAGSTAYNYSAHGPILPLGSHTLALTPIAPYRPRRWRGAILKADTEIRLRVLDPYKRPVSVTADSHEIRDVVEVTIRESTEQRVTLLFDPEHNLEERIFSEQFAF.

Residue aspartate 49 is the Proton acceptor of the active site. Residues 49–50 (DG), arginine 54, 118–119 (NE), aspartate 148, alanine 156, 159–164 (TAYNYS), and alanine 183 contribute to the NAD(+) site.

This sequence belongs to the NAD kinase family. It depends on a divalent metal cation as a cofactor.

The protein localises to the cytoplasm. It carries out the reaction NAD(+) + ATP = ADP + NADP(+) + H(+). In terms of biological role, involved in the regulation of the intracellular balance of NAD and NADP, and is a key enzyme in the biosynthesis of NADP. Catalyzes specifically the phosphorylation on 2'-hydroxyl of the adenosine moiety of NAD to yield NADP. This Xylella fastidiosa (strain Temecula1 / ATCC 700964) protein is NAD kinase.